We begin with the raw amino-acid sequence, 232 residues long: Putative homeobox protein NANOG2 (232 aa).

Residues 1 to 10 (MDLPIEDSHD) are compositionally biased toward basic and acidic residues. A disordered region spans residues 1–39 (MDLPIEDSHDSSTSPKGKQPTTAEKSATKKEDKVPVKKQ). The segment covering 11–25 (SSTSPKGKQPTTAEK) has biased composition (polar residues). The span at 26 to 35 (SATKKEDKVP) shows a compositional bias: basic and acidic residues. 8 tandem repeats follow at residues 123-127 (WSNQT), 128-132 (WNNSI), 133-137 (WSNET), 143-147 (WSNHS), 148-152 (WNTQT), 153-157 (WCTQS), 158-162 (WNNQA), and 163-167 (WNSPF). Residues 123-167 (WSNQTWNNSIWSNETQNIQSWSNHSWNTQTWCTQSWNNQAWNSPF) form an 8 X repeats starting with a Trp in each unit region. The sufficient for transactivation activity stretch occupies residues 123 to 167 (WSNQTWNNSIWSNETQNIQSWSNHSWNTQTWCTQSWNNQAWNSPF). Positions 168 to 232 (YNCGEESLQS…YSTNMQPEDV (65 aa)) are sufficient for strong transactivation activity.

This sequence belongs to the Nanog homeobox family.

The protein resides in the nucleus. Its function is as follows. Probable transcriptional regulator. This chain is Putative homeobox protein NANOG2 (NANOGP1), found in Pan troglodytes (Chimpanzee).